The following is a 404-amino-acid chain: Multidrug resistance protein MdtG (404 aa).

The next 11 membrane-spanning stretches (helical) occupy residues Leu19–Val39, Leu56–Ala76, Leu90–Ile110, Ala113–Ala133, Thr144–Ala164, Pro171–Ile191, Leu222–Leu242, Ile254–Pro274, Ile288–Thr308, Phe317–Asn337, and Ala376–Leu396.

Belongs to the major facilitator superfamily. DHA1 family. MdtG (TC 2.A.1.2.20) subfamily.

It is found in the cell inner membrane. The polypeptide is Multidrug resistance protein MdtG (Salmonella paratyphi A (strain ATCC 9150 / SARB42)).